A 375-amino-acid chain; its full sequence is Alcohol dehydrogenase 1A (375 aa).

Serine 2 carries the N-acetylserine modification. Phosphoserine is present on serine 23. Cysteine 47 contributes to the Zn(2+) binding site. 48-52 is an NAD(+) binding site; that stretch reads GTDDH. Zn(2+)-binding residues include histidine 68, cysteine 98, cysteine 101, cysteine 104, cysteine 112, and cysteine 175. NAD(+)-binding positions include 200-205, aspartate 224, lysine 229, isoleucine 270, 293-295, 318-320, and arginine 370; these read GLGGVG, VGV, and AVL.

It belongs to the zinc-containing alcohol dehydrogenase family. In terms of assembly, dimer of identical or heterodimer of closely related subunits alpha, beta, or gamma that are encoded by genes ADH1A, ADH1B, and ADH1C, respectively. Requires Zn(2+) as cofactor.

The protein resides in the cytoplasm. The enzyme catalyses a primary alcohol + NAD(+) = an aldehyde + NADH + H(+). The catalysed reaction is a secondary alcohol + NAD(+) = a ketone + NADH + H(+). It catalyses the reaction butan-1-ol + NAD(+) = butanal + NADH + H(+). It carries out the reaction 1-propanol + NAD(+) = propanal + NADH + H(+). In terms of biological role, alcohol dehydrogenase. Oxidizes primary as well as secondary alcohols. Ethanol is a very poor substrate. The polypeptide is Alcohol dehydrogenase 1A (ADH1A) (Pongo abelii (Sumatran orangutan)).